A 1508-amino-acid polypeptide reads, in one-letter code: Gem-associated protein 5 (1508 aa).

An important for interaction with U1 snRNA region spans residues M1–L124. The interval N13–Y15 is interaction with U4 snRNA. Phosphoserine is present on S48. Residue T51 is modified to Phosphothreonine. WD repeat units lie at residues G62 to E104, L107 to F148, E150 to H189, G193 to I264, T280 to Y321, H333 to T374, S377 to D417, G424 to I464, Y468 to Q509, K533 to T573, and Q576 to P622. S624 carries the phosphoserine modification. WD repeat units lie at residues G637 to N677 and G680 to P720. Residues Q715–E790 form a disordered region. The segment covering A739–T748 has biased composition (basic residues). T751 bears the Phosphothreonine mark. K754 is covalently cross-linked (Glycyl lysine isopeptide (Lys-Gly) (interchain with G-Cter in SUMO2)). Phosphoserine is present on residues S757, S770, S778, and S847. Disordered stretches follow at residues E1313–L1343 and Q1389–P1428. The stretch at E1362–L1393 forms a coiled coil. Polar residues predominate over residues K1390 to N1399.

It belongs to the WD repeat gemin-5 family. As to quaternary structure, part of the core SMN complex that contains SMN1, GEMIN2/SIP1, DDX20/GEMIN3, GEMIN4, GEMIN5, GEMIN6, GEMIN7, GEMIN8 and STRAP/UNRIP. Part of the SMN-Sm complex that contains SMN1, GEMIN2/SIP1, DDX20/GEMIN3, GEMIN4, GEMIN5, GEMIN6, GEMIN7, GEMIN8, STRAP/UNRIP and the Sm proteins SNRPB, SNRPD1, SNRPD2, SNRPD3, SNRPE, SNRPF and SNRPG. Interacts with GEMIN2; the interaction is direct. Interacts with SMN1, SNRPB, SNRPD1, SNRPD2, SNRPD3 and SNRPE; the interaction is direct. Interacts with cytosolic DDX20/GEMIN3 and GEMIN4. Interacts with SNRNP70 and HNRNPU. Identified in a complex with 80S ribosomes; binds to the 60S large ribosomal subunit. Interacts with the ribosomal subunits RPL3 and RPL4.

The protein localises to the nucleus. The protein resides in the nucleoplasm. It is found in the gem. It localises to the cytoplasm. Its function is as follows. The SMN complex catalyzes the assembly of small nuclear ribonucleoproteins (snRNPs), the building blocks of the spliceosome, and thereby plays an important role in the splicing of cellular pre-mRNAs. Most spliceosomal snRNPs contain a common set of Sm proteins SNRPB, SNRPD1, SNRPD2, SNRPD3, SNRPE, SNRPF and SNRPG that assemble in a heptameric protein ring on the Sm site of the small nuclear RNA to form the core snRNP (Sm core). In the cytosol, the Sm proteins SNRPD1, SNRPD2, SNRPE, SNRPF and SNRPG are trapped in an inactive 6S pICln-Sm complex by the chaperone CLNS1A that controls the assembly of the core snRNP. To assemble core snRNPs, the SMN complex accepts the trapped 5Sm proteins from CLNS1A forming an intermediate. Binding of snRNA inside 5Sm ultimately triggers eviction of the SMN complex, thereby allowing binding of SNRPD3 and SNRPB to complete assembly of the core snRNP. Within the SMN complex, GEMIN5 recognizes and delivers the small nuclear RNAs (snRNAs) to the SMN complex. Binds to the 7-methylguanosine cap of RNA molecules. Binds to the 3'-UTR of SMN1 mRNA and regulates its translation; does not affect mRNA stability. May play a role in the regulation of protein synthesis via its interaction with ribosomes. The protein is Gem-associated protein 5 (GEMIN5) of Homo sapiens (Human).